The primary structure comprises 74 residues: Protein kish-B (74 aa).

Residues 1–22 (MTNVYSLDGLLVFALLFVCTCA) form the signal peptide. Over 23–52 (YFRKVPRLRSWLLSEKKGVWGVFYKAAVIG) the chain is Extracellular. The chain crosses the membrane as a helical span at residues 53-73 (SRLHLAVSISCIAMAFYVLFI). Residue Lys74 is a topological domain, cytoplasmic.

This sequence belongs to the KISH family.

The protein resides in the golgi apparatus membrane. Involved in the early part of the secretory pathway. In Xenopus laevis (African clawed frog), this protein is Protein kish-B (tmem167b).